The sequence spans 199 residues: Recombination protein RecR (199 aa).

A C4-type zinc finger spans residues 58–73 (CVNCGNIGTGDLCEIC). The Toprim domain occupies 81–176 (GEICVVEDVA…TLSSLAQGVP (96 aa)).

Belongs to the RecR family.

May play a role in DNA repair. It seems to be involved in an RecBC-independent recombinational process of DNA repair. It may act with RecF and RecO. This chain is Recombination protein RecR, found in Jannaschia sp. (strain CCS1).